We begin with the raw amino-acid sequence, 859 residues long: Volume-regulated anion channel subunit LRRC8D (859 aa).

The Cytoplasmic segment spans residues 1–22 (MFTLAEVASLNDIQPTYRILKP). The helical transmembrane segment at 23–48 (WWDVFMDYLAVVMLMVAIFAGTMQLT) threads the bilayer. Topologically, residues 49–164 (KDQVVCLPVL…YHLALPWYSK (116 aa)) are extracellular. A disulfide bridge connects residues C54 and C355. The disordered stretch occupies residues 110–138 (IPLQATHPHAESTLPNQEAKKEKRDPTGR). A compositionally biased stretch (basic and acidic residues) spans 127 to 138 (EAKKEKRDPTGR). A helical transmembrane segment spans residues 165 to 183 (YFPYLALIHTIILMVSSNF). Residues 184-309 (WFKYPKTCSK…EDSDLIYKLY (126 aa)) are Cytoplasmic-facing. Positions 222 to 252 (SEENKQRITGAQTLPKHVSTSSDEGSPSAST) are disordered. The span at 228 to 252 (RITGAQTLPKHVSTSSDEGSPSAST) shows a compositional bias: polar residues. Phosphoserine is present on residues S242, S243, and S247. The chain crosses the membrane as a helical span at residues 310–331 (VVQTLIKTAKFIFILCYTANFV). Topologically, residues 332 to 361 (NAISFEHVCKPKVEHLTGYEVFECTHNMAY) are extracellular. The helical transmembrane segment at 362-387 (MLKKLLISYISIICVYGFICLYTLFW) threads the bilayer. The Cytoplasmic portion of the chain corresponds to 388–859 (LFRIPLKEYS…DVNVPFANGI (472 aa)). LRR repeat units lie at residues 515–535 (NLQE…AFSF), 539–560 (HLRC…VYLL), 562–583 (NLRE…IGLE), 590–610 (HLKI…ITDV), 613–633 (HLTK…NSLK), 637–658 (NVAE…IFSL), 660–681 (NLQE…ISFQ), 685–706 (RLTC…ITHV), 708–729 (NLES…VFSL), 731–752 (KLRC…IGLL), 754–775 (NLQH…LFKC), 777–798 (KLRT…ISQL), and 800–821 (QLTQ…LGQC).

This sequence belongs to the LRRC8 family. In terms of assembly, heterohexamer; oligomerizes with other LRRC8 proteins (LRRC8A, LRRC8B, LRRC8C and/or LRRC8E) to form a heterohexamer. In vivo, the subunit composition may depend primarily on expression levels, and heterooligomeric channels containing various proportions of the different LRRC8 proteins may coexist. In terms of tissue distribution, expressed in pancreatic beta cells. Also expressed in glucagon-secreting pancreatic alpha cells.

It is found in the cell membrane. Its subcellular location is the endoplasmic reticulum membrane. The enzyme catalyses chloride(in) = chloride(out). It catalyses the reaction iodide(out) = iodide(in). It carries out the reaction taurine(out) = taurine(in). Functionally, non-essential component of the volume-regulated anion channel (VRAC, also named VSOAC channel), an anion channel required to maintain a constant cell volume in response to extracellular or intracellular osmotic changes. The VRAC channel conducts iodide better than chloride and can also conduct organic osmolytes like taurine. Plays a redundant role in the efflux of amino acids, such as aspartate, in response to osmotic stress family member (LRRC8B, LRRC8C, LRRC8D or LRRC8E); channel characteristics depend on the precise subunit composition. Also acts as a regulator of glucose-sensing in pancreatic beta cells: VRAC currents, generated in response to hypotonicity- or glucose-induced beta cell swelling, depolarize cells, thereby causing electrical excitation, leading to increase glucose sensitivity and insulin secretion. VRAC channels containing LRRC8D inhibit transport of immunoreactive cyclic dinucleotide GMP-AMP (2'-3'-cGAMP), an immune messenger produced in response to DNA virus in the cytosol. This chain is Volume-regulated anion channel subunit LRRC8D, found in Mus musculus (Mouse).